Here is a 372-residue protein sequence, read N- to C-terminus: tRNA-specific 2-thiouridylase MnmA (372 aa).

ATP-binding positions include 11–18 (GMSGGVDS) and M37. The interaction with target base in tRNA stretch occupies residues 97–99 (NPD). The active-site Nucleophile is C102. C102 and C199 form a disulfide bridge. Residue G126 coordinates ATP. Residues 149-151 (KDQ) are interaction with tRNA. Residue C199 is the Cysteine persulfide intermediate of the active site. The interval 309-310 (RY) is interaction with tRNA.

It belongs to the MnmA/TRMU family.

It is found in the cytoplasm. It carries out the reaction S-sulfanyl-L-cysteinyl-[protein] + uridine(34) in tRNA + AH2 + ATP = 2-thiouridine(34) in tRNA + L-cysteinyl-[protein] + A + AMP + diphosphate + H(+). Functionally, catalyzes the 2-thiolation of uridine at the wobble position (U34) of tRNA, leading to the formation of s(2)U34. The sequence is that of tRNA-specific 2-thiouridylase MnmA from Staphylococcus aureus (strain USA300).